A 614-amino-acid chain; its full sequence is Jacalin-related lectin 14 (614 aa).

Jacalin-type lectin domains are found at residues 27–169, 172–314, 317–462, and 468–611; these read VQKM…YFSW, PRKM…YFTT, PTKS…YFSP, and AEKL…HVVP.

It belongs to the jacalin lectin family.

This is Jacalin-related lectin 14 (JAL14) from Arabidopsis thaliana (Mouse-ear cress).